The chain runs to 340 residues: Diacylglycerol acyltransferase/mycolyltransferase Ag85C (340 aa).

An N-terminal signal peptide occupies residues 1 to 45; the sequence is MTFFEQVRRLRSAATTLPRRLAIAAMGAVLVYGLVGTFGGPATAG. A substrate-binding site is contributed by 86-87; sequence LR. The fibronectin-binding stretch occupies residues 102 to 112; the sequence is FEEYYQSGLSV. Residues S170 and N198 each coordinate substrate. S170 acts as the Nucleophile in catalysis. Residue E274 is part of the active site. Substrate is bound by residues 276-279 and 306-308; these read LTLR and HSW. Residue H306 is part of the active site.

It belongs to the mycobacterial A85 antigen family. As to quaternary structure, homodimer.

Its subcellular location is the secreted. The catalysed reaction is an acyl-CoA + a 1,2-diacyl-sn-glycerol = a triacyl-sn-glycerol + CoA. It catalyses the reaction 2 alpha,alpha'-trehalose 6-mycolate = alpha,alpha'-trehalose 6,6'-bismycolate + alpha,alpha-trehalose. The antigen 85 proteins (FbpA, FbpB, FbpC) are responsible for the high affinity of mycobacteria to fibronectin, a large adhesive glycoprotein, which facilitates the attachment of M.tuberculosis to murine alveolar macrophages (AMs). They also help to maintain the integrity of the cell wall by catalyzing the transfer of mycolic acids to cell wall arabinogalactan and through the synthesis of alpha,alpha-trehalose dimycolate (TDM, cord factor). They catalyze the transfer of a mycoloyl residue from one molecule of alpha,alpha-trehalose monomycolate (TMM) to another TMM, leading to the formation of TDM. In Mycobacterium bovis (strain ATCC BAA-935 / AF2122/97), this protein is Diacylglycerol acyltransferase/mycolyltransferase Ag85C (fbpC).